The primary structure comprises 426 residues: Serine--tRNA ligase (426 aa).

231–233 (TAE) serves as a coordination point for L-serine. ATP contacts are provided by residues 262 to 264 (RRE) and Val278. L-serine is bound at residue Glu285. 349-352 (EVSS) is an ATP binding site. Ser384 provides a ligand contact to L-serine.

This sequence belongs to the class-II aminoacyl-tRNA synthetase family. Type-1 seryl-tRNA synthetase subfamily. As to quaternary structure, homodimer. The tRNA molecule binds across the dimer.

It is found in the cytoplasm. The enzyme catalyses tRNA(Ser) + L-serine + ATP = L-seryl-tRNA(Ser) + AMP + diphosphate + H(+). It catalyses the reaction tRNA(Sec) + L-serine + ATP = L-seryl-tRNA(Sec) + AMP + diphosphate + H(+). It functions in the pathway aminoacyl-tRNA biosynthesis; selenocysteinyl-tRNA(Sec) biosynthesis; L-seryl-tRNA(Sec) from L-serine and tRNA(Sec): step 1/1. Functionally, catalyzes the attachment of serine to tRNA(Ser). Is also able to aminoacylate tRNA(Sec) with serine, to form the misacylated tRNA L-seryl-tRNA(Sec), which will be further converted into selenocysteinyl-tRNA(Sec). This chain is Serine--tRNA ligase, found in Chlamydia felis (strain Fe/C-56) (Chlamydophila felis).